The primary structure comprises 726 residues: Uracil catabolism protein 2 (726 aa).

A DNA-binding region (zn(2)-C6 fungal-type) is located at residues 24 to 53; that stretch reads CGVCRKFKTRCDFEPLVGKCHRCNVLRLEC. 2 disordered regions span residues 152–183 and 629–681; these read AGMGDRNATYDDDDDGDDDGHDHSDSDNFVNG and SGRL…SGAD. The segment covering 161-170 has biased composition (acidic residues); that stretch reads YDDDDDGDDD. The span at 640-679 shows a compositional bias: polar residues; the sequence is RGSPSMTPGFQQSVQSSSALQGSKAGSPQSARSVNSQGSG.

This sequence belongs to the URC2 family.

It localises to the nucleus. Probable transcriptional activator involved in uracil catabolism. The protein is Uracil catabolism protein 2 (URC2) of Lachancea kluyveri (Yeast).